A 37-amino-acid polypeptide reads, in one-letter code: Mating pheromone Er-22 (37 aa).

Disulfide bonds link cysteine 3/cysteine 18, cysteine 10/cysteine 32, and cysteine 15/cysteine 24.

It localises to the secreted. Its function is as follows. Mating ciliate pheromones (or gamones) are diffusible extracellular communication signals that distinguish different intraspecific classes of cells commonly referred to as 'mating types'. They prepare the latter for conjugation by changing their cell surface properties. The sequence is that of Mating pheromone Er-22 (MAT22) from Euplotes raikovi.